The following is a 141-amino-acid chain: Nucleoside diphosphate kinase (141 aa).

ATP-binding residues include K11, F59, R87, T93, R104, and N114. The active-site Pros-phosphohistidine intermediate is H117.

It belongs to the NDK family. Homotetramer. It depends on Mg(2+) as a cofactor.

The protein localises to the cytoplasm. The catalysed reaction is a 2'-deoxyribonucleoside 5'-diphosphate + ATP = a 2'-deoxyribonucleoside 5'-triphosphate + ADP. It carries out the reaction a ribonucleoside 5'-diphosphate + ATP = a ribonucleoside 5'-triphosphate + ADP. In terms of biological role, major role in the synthesis of nucleoside triphosphates other than ATP. The ATP gamma phosphate is transferred to the NDP beta phosphate via a ping-pong mechanism, using a phosphorylated active-site intermediate. This Proteus mirabilis (strain HI4320) protein is Nucleoside diphosphate kinase.